The chain runs to 191 residues: MIRISDAAQAHFAKLLASQEEGTQIRVFVINPGTPNAECGVSYCPPDAVEATDTALKFDLLTAYVDELSAPYLEDAEIDFVTDQLGSQLTLKAPNAKMRKVADDAPLMERVEYMLQSQINPQLAGHGGRVTLMEITDEGYAILQFGGGCNGCSMVDVTLKEGIEKQLLNEFPELKGVRDLTEHQRGEHSYY.

Residues cysteine 149 and cysteine 152 each contribute to the [4Fe-4S] cluster site.

It belongs to the NfuA family. Homodimer. [4Fe-4S] cluster is required as a cofactor.

Involved in iron-sulfur cluster biogenesis. Binds a 4Fe-4S cluster, can transfer this cluster to apoproteins, and thereby intervenes in the maturation of Fe/S proteins. Could also act as a scaffold/chaperone for damaged Fe/S proteins. This is Fe/S biogenesis protein NfuA from Cronobacter sakazakii (strain ATCC BAA-894) (Enterobacter sakazakii).